The following is a 189-amino-acid chain: Glycerol-3-phosphate acyltransferase (189 aa).

The next 4 membrane-spanning stretches (helical) occupy residues 1–21 (MVWL…AILL), 79–99 (QQAW…YFNF), 113–133 (LGLY…VFAF), and 151–171 (LLAW…GVIV).

The protein belongs to the PlsY family. As to quaternary structure, probably interacts with PlsX.

The protein localises to the cell inner membrane. It carries out the reaction an acyl phosphate + sn-glycerol 3-phosphate = a 1-acyl-sn-glycero-3-phosphate + phosphate. It participates in lipid metabolism; phospholipid metabolism. Catalyzes the transfer of an acyl group from acyl-phosphate (acyl-PO(4)) to glycerol-3-phosphate (G3P) to form lysophosphatidic acid (LPA). This enzyme utilizes acyl-phosphate as fatty acyl donor, but not acyl-CoA or acyl-ACP. The chain is Glycerol-3-phosphate acyltransferase from Azotobacter vinelandii (strain DJ / ATCC BAA-1303).